A 525-amino-acid chain; its full sequence is GMP synthase [glutamine-hydrolyzing] (525 aa).

A Glutamine amidotransferase type-1 domain is found at Arg-9–Leu-207. Cys-86 functions as the Nucleophile in the catalytic mechanism. Residues His-181 and Glu-183 contribute to the active site. The region spanning Trp-208–Arg-400 is the GMPS ATP-PPase domain. Ser-235 to Ser-241 lines the ATP pocket.

In terms of assembly, homodimer.

It carries out the reaction XMP + L-glutamine + ATP + H2O = GMP + L-glutamate + AMP + diphosphate + 2 H(+). It participates in purine metabolism; GMP biosynthesis; GMP from XMP (L-Gln route): step 1/1. In terms of biological role, catalyzes the synthesis of GMP from XMP. This chain is GMP synthase [glutamine-hydrolyzing], found in Cronobacter sakazakii (strain ATCC BAA-894) (Enterobacter sakazakii).